The chain runs to 431 residues: MGNNIKVTFNPDKIAAWWPAVGTYYTTTYPQNQSVFQPGIYQTTSLINPKNQQELDSVLINRYKQIDWNTWQGFPVDQKLPLVSRDPPLKPHINQSAQTFEIKPGPIIVPGIRDIPRGLVPPQTPTNRDQGRKPTPPTPPLRDTHPHLTMKNQTFRLQGFVDGLRDLTTTERYHNAYGDPFTTLSPVVPTVSTILSPPSTTGDPALSPEMSPSSLLGLLAGLQVVYFLWTKILTIAQNLDWWWTSLSFPGGIPECTGQNSQFQTCKHLPTSCPPTCNGFRWMYLRRFIIYLLVLLLCLIFLLVLLDWKGLIPVCPLQPTTETTVNCRQCTLSVQDTYTPPYCCCLKPTAGNCTCWPIPSSWALGNYLWEWALARFSWLNLLVPLLQWLGGISLIAWFLLIWMIWFWGPALLSILPPFIPIFVLFFLIWVYI.

Gly-2 is lipidated: N-myristoyl glycine; by host. The tract at residues 2-148 (GNNIKVTFNP…PPLRDTHPHL (147 aa)) is pre-S1. The segment at 2–207 (GNNIKVTFNP…PSTTGDPALS (206 aa)) is pre-S. The Virion surface; in external conformation segment spans residues 2-214 (GNNIKVTFNP…ALSPEMSPSS (213 aa)). The Intravirion; in internal conformation portion of the chain corresponds to 2–286 (GNNIKVTFNP…NGFRWMYLRR (285 aa)). Asn-3 carries N-linked (GlcNAc...) asparagine glycosylation. Positions 115–146 (IPRGLVPPQTPTNRDQGRKPTPPTPPLRDTHP) are disordered. The tract at residues 149–207 (TMKNQTFRLQGFVDGLRDLTTTERYHNAYGDPFTTLSPVVPTVSTILSPPSTTGDPALS) is pre-S2. The chain crosses the membrane as a helical span at residues 215–235 (LLGLLAGLQVVYFLWTKILTI). Residues 236-286 (AQNLDWWWTSLSFPGGIPECTGQNSQFQTCKHLPTSCPPTCNGFRWMYLRR) lie on the Intravirion; in external conformation side of the membrane. The chain crosses the membrane as a helical span at residues 287–307 (FIIYLLVLLLCLIFLLVLLDW). Topologically, residues 308–379 (KGLIPVCPLQ…WALARFSWLN (72 aa)) are virion surface. Asn-351 carries an N-linked (GlcNAc...) asparagine; by host glycan. The chain crosses the membrane as a helical span at residues 380-400 (LLVPLLQWLGGISLIAWFLLI). The Intravirion segment spans residues 401 to 406 (WMIWFW). A helical transmembrane segment spans residues 407–429 (GPALLSILPPFIPIFVLFFLIWV). Over 430-431 (YI) the chain is Virion surface.

This sequence belongs to the orthohepadnavirus major surface antigen family. In its internal form (Li-HBsAg), interacts with the capsid protein and with the isoform S. Interacts with host chaperone CANX. As to quaternary structure, associates with host chaperone CANX through its pre-S2 N glycan; this association may be essential for isoform M proper secretion. In terms of assembly, interacts with isoform L. Interacts with the antigens of satellite virus HDV (HDVAgs); this interaction is required for encapsidation of HDV genomic RNA. Post-translationally, isoform M is N-terminally acetylated by host at a ratio of 90%, and N-glycosylated by host at the pre-S2 region. In terms of processing, myristoylated.

It localises to the virion membrane. Its function is as follows. The large envelope protein exists in two topological conformations, one which is termed 'external' or Le-HBsAg and the other 'internal' or Li-HBsAg. In its external conformation the protein attaches the virus to cell receptors and thereby initiating infection. This interaction determines the species specificity and liver tropism. This attachment induces virion internalization predominantly through caveolin-mediated endocytosis. The large envelope protein also assures fusion between virion membrane and endosomal membrane. In its internal conformation the protein plays a role in virion morphogenesis and mediates the contact with the nucleocapsid like a matrix protein. The middle envelope protein plays an important role in the budding of the virion. It is involved in the induction of budding in a nucleocapsid independent way. In this process the majority of envelope proteins bud to form subviral lipoprotein particles of 22 nm of diameter that do not contain a nucleocapsid. The sequence is that of Large envelope protein from Woodchuck hepatitis B virus (isolate 59) (WHV).